A 129-amino-acid chain; its full sequence is Fluoride-specific ion channel FluC 2 (129 aa).

A run of 4 helical transmembrane segments spans residues 3 to 23 (FLYV…MNLW), 32 to 52 (ATLA…QFLA), 59 to 79 (LVIL…FSAF), and 90 to 110 (GAWL…LIMV). Residues Gly71 and Thr74 each contribute to the Na(+) site.

This sequence belongs to the fluoride channel Fluc/FEX (TC 1.A.43) family.

It is found in the cell membrane. The enzyme catalyses fluoride(in) = fluoride(out). Its activity is regulated as follows. Na(+) is not transported, but it plays an essential structural role and its presence is essential for fluoride channel function. Fluoride-specific ion channel. Important for reducing fluoride concentration in the cell, thus reducing its toxicity. The chain is Fluoride-specific ion channel FluC 2 from Listeria monocytogenes serotype 4b (strain F2365).